Reading from the N-terminus, the 347-residue chain is Methylthioribose-1-phosphate isomerase (347 aa).

Residues 45–47 (RGA), R88, and Q197 contribute to the substrate site. D238 serves as the catalytic Proton donor. Residue 248–249 (NK) participates in substrate binding.

This sequence belongs to the eIF-2B alpha/beta/delta subunits family. MtnA subfamily.

It carries out the reaction 5-(methylsulfanyl)-alpha-D-ribose 1-phosphate = 5-(methylsulfanyl)-D-ribulose 1-phosphate. The protein operates within amino-acid biosynthesis; L-methionine biosynthesis via salvage pathway; L-methionine from S-methyl-5-thio-alpha-D-ribose 1-phosphate: step 1/6. Its function is as follows. Catalyzes the interconversion of methylthioribose-1-phosphate (MTR-1-P) into methylthioribulose-1-phosphate (MTRu-1-P). This is Methylthioribose-1-phosphate isomerase from Nostoc sp. (strain PCC 7120 / SAG 25.82 / UTEX 2576).